We begin with the raw amino-acid sequence, 236 residues long: Phosphoribosylaminoimidazole-succinocarboxamide synthase (236 aa).

This sequence belongs to the SAICAR synthetase family.

The enzyme catalyses 5-amino-1-(5-phospho-D-ribosyl)imidazole-4-carboxylate + L-aspartate + ATP = (2S)-2-[5-amino-1-(5-phospho-beta-D-ribosyl)imidazole-4-carboxamido]succinate + ADP + phosphate + 2 H(+). It functions in the pathway purine metabolism; IMP biosynthesis via de novo pathway; 5-amino-1-(5-phospho-D-ribosyl)imidazole-4-carboxamide from 5-amino-1-(5-phospho-D-ribosyl)imidazole-4-carboxylate: step 1/2. This chain is Phosphoribosylaminoimidazole-succinocarboxamide synthase (purC), found in Lactococcus lactis subsp. lactis (strain IL1403) (Streptococcus lactis).